A 76-amino-acid polypeptide reads, in one-letter code: Large ribosomal subunit protein uL30 (76 aa).

It belongs to the universal ribosomal protein uL30 family. In terms of assembly, part of the 50S ribosomal subunit.

This is Large ribosomal subunit protein uL30 from Anaeromyxobacter dehalogenans (strain 2CP-1 / ATCC BAA-258).